The sequence spans 457 residues: UDP-glycosyltransferase 72C1 (457 aa).

UDP-alpha-D-glucose contacts are provided by residues S272, 343–344, 361–369, and 383–386; these read WA, HCGWNSVLE, and YSEQ.

The protein belongs to the UDP-glycosyltransferase family.

The polypeptide is UDP-glycosyltransferase 72C1 (UGT72C1) (Arabidopsis thaliana (Mouse-ear cress)).